The primary structure comprises 334 residues: 6-phosphogluconolactonase (334 aa).

This sequence belongs to the cycloisomerase 2 family.

The enzyme catalyses 6-phospho-D-glucono-1,5-lactone + H2O = 6-phospho-D-gluconate + H(+). Its pathway is carbohydrate degradation; pentose phosphate pathway; D-ribulose 5-phosphate from D-glucose 6-phosphate (oxidative stage): step 2/3. Functionally, catalyzes the hydrolysis of 6-phosphogluconolactone to 6-phosphogluconate. The chain is 6-phosphogluconolactonase from Buchnera aphidicola subsp. Acyrthosiphon pisum (strain 5A).